The chain runs to 536 residues: Bifunctional purine biosynthesis protein PurH (536 aa).

One can recognise an MGS-like domain in the interval 8-158 (IPAPDEVRIK…KNHAYVTIVT (151 aa)).

It belongs to the PurH family.

It carries out the reaction (6R)-10-formyltetrahydrofolate + 5-amino-1-(5-phospho-beta-D-ribosyl)imidazole-4-carboxamide = 5-formamido-1-(5-phospho-D-ribosyl)imidazole-4-carboxamide + (6S)-5,6,7,8-tetrahydrofolate. The enzyme catalyses IMP + H2O = 5-formamido-1-(5-phospho-D-ribosyl)imidazole-4-carboxamide. Its pathway is purine metabolism; IMP biosynthesis via de novo pathway; 5-formamido-1-(5-phospho-D-ribosyl)imidazole-4-carboxamide from 5-amino-1-(5-phospho-D-ribosyl)imidazole-4-carboxamide (10-formyl THF route): step 1/1. It functions in the pathway purine metabolism; IMP biosynthesis via de novo pathway; IMP from 5-formamido-1-(5-phospho-D-ribosyl)imidazole-4-carboxamide: step 1/1. This chain is Bifunctional purine biosynthesis protein PurH, found in Rhizobium meliloti (strain 1021) (Ensifer meliloti).